Consider the following 151-residue polypeptide: Nucleoside diphosphate kinase (151 aa).

Residues lysine 9, phenylalanine 57, arginine 86, threonine 92, arginine 103, and asparagine 113 each contribute to the ATP site. Histidine 116 serves as the catalytic Pros-phosphohistidine intermediate.

The protein belongs to the NDK family. As to quaternary structure, homotetramer. Mg(2+) is required as a cofactor.

It localises to the cytoplasm. The enzyme catalyses a 2'-deoxyribonucleoside 5'-diphosphate + ATP = a 2'-deoxyribonucleoside 5'-triphosphate + ADP. It carries out the reaction a ribonucleoside 5'-diphosphate + ATP = a ribonucleoside 5'-triphosphate + ADP. Major role in the synthesis of nucleoside triphosphates other than ATP. The ATP gamma phosphate is transferred to the NDP beta phosphate via a ping-pong mechanism, using a phosphorylated active-site intermediate. This chain is Nucleoside diphosphate kinase, found in Chloroflexus aurantiacus (strain ATCC 29364 / DSM 637 / Y-400-fl).